The sequence spans 983 residues: Type IV secretion system protein CagE (983 aa).

597–604 (GSTGSGKT) is an ATP binding site.

The protein belongs to the TrbE/VirB4 family. In terms of assembly, component of the Cag type IV secretion system, which is composed of a wheel-shaped outer membrane complex (OMC) and an inner membrane complex (IMC). Interacts with CagV and CagBeta.

The protein resides in the cell inner membrane. The enzyme catalyses ATP + H2O + cellular proteinSide 1 = ADP + phosphate + cellular proteinSide 2.. Functionally, ATPase component of the type IV secretion system Cag (Cag-T4SS). Acts as a molecular motor to provide the energy that is required for the export of proteins. Required for CagA translocation and induction of IL-8 in host gastric epithelial cells. Plays a key role in Cag-T4SS pilus biogenesis, especially in the localization and stabilization of the pilus-associated components CagI, CagL and the surface protein CagH. Is also critical for assembly of the entire cytoplasmic portion of the Cag inner membrane complex (IMC). The polypeptide is Type IV secretion system protein CagE (Helicobacter pylori (strain ATCC 700392 / 26695) (Campylobacter pylori)).